The chain runs to 114 residues: Iron-sulfur cluster insertion protein ErpA (114 aa).

Residues Cys42, Cys106, and Cys108 each coordinate iron-sulfur cluster.

This sequence belongs to the HesB/IscA family. Homodimer. The cofactor is iron-sulfur cluster.

Functionally, required for insertion of 4Fe-4S clusters for at least IspG. The chain is Iron-sulfur cluster insertion protein ErpA from Yersinia pseudotuberculosis serotype O:1b (strain IP 31758).